Reading from the N-terminus, the 166-residue chain is Ubiquitin-fold modifier-conjugating enzyme 1 (166 aa).

The active-site Glycyl thioester intermediate is the C116.

This sequence belongs to the ubiquitin-conjugating enzyme family. UFC1 subfamily.

E2-like enzyme which forms an intermediate with UFM1 via a thioester linkage. The chain is Ubiquitin-fold modifier-conjugating enzyme 1 from Monosiga brevicollis (Choanoflagellate).